The following is a 331-amino-acid chain: Tetraacyldisaccharide 4'-kinase (331 aa).

57–64 (SVGGNGKT) provides a ligand contact to ATP.

The protein belongs to the LpxK family.

The catalysed reaction is a lipid A disaccharide + ATP = a lipid IVA + ADP + H(+). Its pathway is glycolipid biosynthesis; lipid IV(A) biosynthesis; lipid IV(A) from (3R)-3-hydroxytetradecanoyl-[acyl-carrier-protein] and UDP-N-acetyl-alpha-D-glucosamine: step 6/6. Functionally, transfers the gamma-phosphate of ATP to the 4'-position of a tetraacyldisaccharide 1-phosphate intermediate (termed DS-1-P) to form tetraacyldisaccharide 1,4'-bis-phosphate (lipid IVA). In Histophilus somni (strain 2336) (Haemophilus somnus), this protein is Tetraacyldisaccharide 4'-kinase.